The following is a 353-amino-acid chain: Biotin synthase (353 aa).

Positions 1–22 (MTACSTTPTTSATSAQPAAGSP) are enriched in low complexity. The segment at 1-30 (MTACSTTPTTSATSAQPAAGSPLQWHARPS) is disordered. Residues 72–299 (GDIELATLLS…TARVRLSAGR (228 aa)) enclose the Radical SAM core domain. Residues Cys-87, Cys-91, and Cys-94 each coordinate [4Fe-4S] cluster. [2Fe-2S] cluster-binding residues include Cys-131, Cys-162, Cys-222, and Arg-294.

Belongs to the radical SAM superfamily. Biotin synthase family. In terms of assembly, homodimer. Requires [4Fe-4S] cluster as cofactor. [2Fe-2S] cluster is required as a cofactor.

It catalyses the reaction (4R,5S)-dethiobiotin + (sulfur carrier)-SH + 2 reduced [2Fe-2S]-[ferredoxin] + 2 S-adenosyl-L-methionine = (sulfur carrier)-H + biotin + 2 5'-deoxyadenosine + 2 L-methionine + 2 oxidized [2Fe-2S]-[ferredoxin]. Its pathway is cofactor biosynthesis; biotin biosynthesis; biotin from 7,8-diaminononanoate: step 2/2. Its function is as follows. Catalyzes the conversion of dethiobiotin (DTB) to biotin by the insertion of a sulfur atom into dethiobiotin via a radical-based mechanism. The protein is Biotin synthase of Delftia acidovorans (strain DSM 14801 / SPH-1).